A 379-amino-acid chain; its full sequence is Glutamate 5-kinase (379 aa).

K19 is an ATP binding site. Substrate contacts are provided by S59, D146, and N158. ATP is bound by residues 178 to 179 (TD) and 220 to 226 (TGGMATK). Residues 285–363 (SGDIVIDQGA…KDIISILGYD (79 aa)) enclose the PUA domain.

This sequence belongs to the glutamate 5-kinase family.

It is found in the cytoplasm. It catalyses the reaction L-glutamate + ATP = L-glutamyl 5-phosphate + ADP. Its pathway is amino-acid biosynthesis; L-proline biosynthesis; L-glutamate 5-semialdehyde from L-glutamate: step 1/2. Its function is as follows. Catalyzes the transfer of a phosphate group to glutamate to form L-glutamate 5-phosphate. The chain is Glutamate 5-kinase from Vibrio vulnificus (strain YJ016).